Here is a 732-residue protein sequence, read N- to C-terminus: MGTTILVLSKILTFLLTTMLIGSSVIQCSSVTYDKKAIVINGHRRILLSGSIHYPRSTPEMWEDLIKKAKDGGLDVIDTYVFWNGHEPSPGTYNFEGRYDLVRFIKTIQEVGLYVHLRIGPYVCAEWNFGGFPVWLKYVDGISFRTDNGPFKSAMQGFTEKIVQMMKEHRFFASQGGPIILSQIENEFEPDLKGLGPAGHSYVNWAAKMAVGLNTGVPWVMCKEDDAPDPIINTCNGFYCDYFTPNKPYKPTMWTEAWSGWFTEFGGTVPKRPVEDLAFGVARFIQKGGSYINYYMYHGGTNFGRTAGGPFITTSYDYDAPIDEYGLVQEPKYSHLKQLHQAIKQCEAALVSSDPHVTKLGNYEEAHVFTAGKGSCVAFLTNYHMNAPAKVVFNNRHYTLPAWSISILPDCRNVVFNTATVAAKTSHVQMVPSGSILYSVARYDEDIATYGNRGTITARGLLEQVNVTRDTTDYLWYTTSVDIKASESFLRGGKWPTLTVDSAGHAVHVFVNGHFYGSAFGTRENRKFSFSSQVNLRGGANKIALLSVAVGLPNVGPHFETWATGIVGSVVLHGLDEGNKDLSWQKWTYQAGLRGESMNLVSPTEDSSVDWIKGSLAKQNKQPLTWYKAYFDAPRGNEPLALDLKSMGKGQAWINGQSIGRYWMAFAKGDCGSCNYAGTYRQNKCQSGCGEPTQRWYHVPRSWLKPKGNLLVLFEELGGDISKVSVVKRSVN.

Residues 1 to 23 form the signal peptide; sequence MGTTILVLSKILTFLLTTMLIGS. E187 acts as the Proton donor in catalysis. The Nucleophile role is filled by E256. N466 carries an N-linked (GlcNAc...) asparagine glycan.

The protein belongs to the glycosyl hydrolase 35 family. As to expression, expressed in leaves and flowers.

The protein localises to the secreted. It localises to the extracellular space. Its subcellular location is the apoplast. The catalysed reaction is Hydrolysis of terminal non-reducing beta-D-galactose residues in beta-D-galactosides.. The protein is Beta-galactosidase 5 (BGAL5) of Arabidopsis thaliana (Mouse-ear cress).